We begin with the raw amino-acid sequence, 464 residues long: 17,18-epoxy-17-hydroxycur-19-ene N-malonyltransferase (464 aa).

Catalysis depends on proton acceptor residues His-191 and Asp-403.

It belongs to the plant acyltransferase family. As to quaternary structure, monomer. Mainly expressed in roots.

It is found in the cytoplasm. It catalyses the reaction 17,18-epoxy-17-hydroxycur-19-ene + malonyl-CoA = prestrychnine + CoA. Its pathway is alkaloid biosynthesis. Functionally, malonylransferase involved in the biosynthesis of curare monoterpene indole alkaloids (MIAs), natural products such as strychnine, a neurotoxic compound used as a pesticide to control rodents, and its pharmacologically active derivatives, including brucine, used to regulate blood pressure. Curare alkaloids act as animal glycine receptor antagonists. Catalyzes the conversion of 17,18-epoxy-17-hydroxycur-19-ene (Wieland-Gumlich aldehyde) to prestrychnine, which is spontaneously converted into strychnine and isostrychnine. This Strychnos nux-vomica (Poison nut) protein is 17,18-epoxy-17-hydroxycur-19-ene N-malonyltransferase.